A 309-amino-acid chain; its full sequence is S-antigen protein (309 aa).

The signal sequence occupies residues 1-23 (MNRILSVSFYLFFLYLYIYKTYG). Residues 52-309 (GKGNKYEDLQ…KSIMNMLILM (258 aa)) are disordered. Residues 60–86 (LQEEGEGENDDEEHSNSEESDNDEENE) are compositionally biased toward acidic residues. Residues 93 to 259 (EAPKSDEAEA…DEAEARKSEA (167 aa)) are compositionally biased toward basic and acidic residues. The tract at residues 97–256 (SDEAEALKSD…RKSDEAEARK (160 aa)) is 20 X 8 AA approximate tandem repeats of A-[RL]-K-S-D-E-A-E. A run of 2 repeats spans residues 257-271 (SEAGTEGPKGTGGPG) and 272-286 (SEAGTEGPKGTGGPG). The 2 X 15 AA tandem repeats of S-E-A-G-T-E-G-P-K-G-T-G-G-P-G stretch occupies residues 257 to 286 (SEAGTEGPKGTGGPGSEAGTEGPKGTGGPG). Residues 263 to 289 (GPKGTGGPGSEAGTEGPKGTGGPGSGG) are compositionally biased toward gly residues.

The protein resides in the parasitophorous vacuole. Functionally, s antigens are soluble heat-stable proteins present in the sera of some infected individuals. The protein is S-antigen protein of Plasmodium falciparum (isolate NF7 / Ghana).